The primary structure comprises 413 residues: uncharacterized protein (413 aa).

A signal peptide spans 1–20; sequence MRVIIVIMMVVFVVVGTSSG.

This is an uncharacterized protein from Archaeoglobus fulgidus (strain ATCC 49558 / DSM 4304 / JCM 9628 / NBRC 100126 / VC-16).